A 286-amino-acid polypeptide reads, in one-letter code: Uridylate cyclase (286 aa).

The Guanylate cyclase domain occupies 90-223 (TAIFVDIRKS…DAVTKAANMS (134 aa)). Phe93 is a binding site for a ribonucleoside 5'-triphosphate. Positions 95, 96, and 140 each coordinate Mn(2+).

Belongs to the adenylyl cyclase class-4/guanylyl cyclase family. Pyrimidine cyclase subfamily. As to quaternary structure, homodimer. It depends on Mn(2+) as a cofactor.

It is found in the cytoplasm. It carries out the reaction UTP = 3',5'-cyclic UMP + diphosphate. In terms of biological role, pycsar (pyrimidine cyclase system for antiphage resistance) provides immunity against bacteriophage. The pyrimidine cyclase (PycC) synthesizes cyclic nucleotides in response to infection; these serve as specific second messenger signals. The signals activate the adjacent effector, leading to bacterial cell death and abortive phage infection. A clade C Pycsar system. The pyrimidine cyclase gene of a two-gene Pycsar system, weakly generates cyclic UMP (cUMP) from UTP, has little to no activity on ATP, CTP or GTP. Expression of this and adjacent effector TpPycTM (AC A0A1T4LJG1) probably confers resistance to bacteriophage. The genes are probably only expressed in response to bacteriophage infection. In Treponema porcinum, this protein is Uridylate cyclase.